A 276-amino-acid chain; its full sequence is Octopine-binding periplasmic protein (276 aa).

The N-terminal stretch at 1–20 (MKLKTILCAALLLVAGQAAA) is a signal peptide. An intrachain disulfide couples Cys57 to Cys64.

It belongs to the bacterial solute-binding protein 3 family.

The protein localises to the periplasm. Functionally, component of the octopine active transport system probably consisting of four subunits: Q, M, P and T. The chain is Octopine-binding periplasmic protein (occT) from Agrobacterium tumefaciens (strain Ach5).